The chain runs to 337 residues: Phosphate acyltransferase (337 aa).

It belongs to the PlsX family. As to quaternary structure, homodimer. Probably interacts with PlsY.

Its subcellular location is the cytoplasm. It carries out the reaction a fatty acyl-[ACP] + phosphate = an acyl phosphate + holo-[ACP]. It functions in the pathway lipid metabolism; phospholipid metabolism. Functionally, catalyzes the reversible formation of acyl-phosphate (acyl-PO(4)) from acyl-[acyl-carrier-protein] (acyl-ACP). This enzyme utilizes acyl-ACP as fatty acyl donor, but not acyl-CoA. The protein is Phosphate acyltransferase of Ehrlichia canis (strain Jake).